The sequence spans 443 residues: Thymidine phosphorylase (443 aa).

Belongs to the thymidine/pyrimidine-nucleoside phosphorylase family. Homodimer.

It catalyses the reaction thymidine + phosphate = 2-deoxy-alpha-D-ribose 1-phosphate + thymine. Its pathway is pyrimidine metabolism; dTMP biosynthesis via salvage pathway; dTMP from thymine: step 1/2. In terms of biological role, the enzymes which catalyze the reversible phosphorolysis of pyrimidine nucleosides are involved in the degradation of these compounds and in their utilization as carbon and energy sources, or in the rescue of pyrimidine bases for nucleotide synthesis. The sequence is that of Thymidine phosphorylase from Shewanella amazonensis (strain ATCC BAA-1098 / SB2B).